Reading from the N-terminus, the 239-residue chain is 1-(5-phosphoribosyl)-5-[(5-phosphoribosylamino)methylideneamino] imidazole-4-carboxamide isomerase (239 aa).

The active-site Proton acceptor is aspartate 8. The Proton donor role is filled by aspartate 129.

The protein belongs to the HisA/HisF family.

Its subcellular location is the cytoplasm. It carries out the reaction 1-(5-phospho-beta-D-ribosyl)-5-[(5-phospho-beta-D-ribosylamino)methylideneamino]imidazole-4-carboxamide = 5-[(5-phospho-1-deoxy-D-ribulos-1-ylimino)methylamino]-1-(5-phospho-beta-D-ribosyl)imidazole-4-carboxamide. It functions in the pathway amino-acid biosynthesis; L-histidine biosynthesis; L-histidine from 5-phospho-alpha-D-ribose 1-diphosphate: step 4/9. This Bacillus cereus (strain ZK / E33L) protein is 1-(5-phosphoribosyl)-5-[(5-phosphoribosylamino)methylideneamino] imidazole-4-carboxamide isomerase.